The sequence spans 434 residues: Protein phosphatase 2C 56 (434 aa).

The PPM-type phosphatase domain maps to 128 to 422 (LYGFTSICGR…DNISVVVVDL (295 aa)). Mg(2+) is bound by residues Asp177, Asp261, Ser262, Asp347, and Asp413. The Nuclear localization signal motif lies at 423–427 (KPRRK).

This sequence belongs to the PP2C family. Interacts with SPK1, ATHB-6, CIPK15/PKS3, GPX3, SRK2E/OST1, SRK2D, SRK2I, SCAR1, SCAR2, SCAR3 and SCARL. Binds to the PA released by the phospholipase D alpha 1 (PLDALPHA1) in response to ABA during the stomatal closure regulation. Interacts with ABA-bounded PYR1, PYL1, PYL2, PYL3, PYL4, PYL5, PYL6, PYL7, PYL8, PYL9, PYL10, and with free PYL2, PYL3, PYL4 and PYL13. Binds to RPL12B, CPK21 and CPK23. Binds to MAPKKK18. Interacts with KIN10. Interacts with phosphorylated PYL8/RCAR3. Requires Mg(2+) as cofactor. It depends on Mn(2+) as a cofactor. As to expression, expressed in seeds and seedlings. In roots, confined to lateral root caps and columella cells.

Its subcellular location is the nucleus. It localises to the cytoplasm. The protein resides in the cell membrane. It catalyses the reaction O-phospho-L-seryl-[protein] + H2O = L-seryl-[protein] + phosphate. The catalysed reaction is O-phospho-L-threonyl-[protein] + H2O = L-threonyl-[protein] + phosphate. Phosphatase activity repressed by oxidized GPX3 and phosphatidic acid (PA). PA is produced by PLD alpha 1 in response to ABA. Repressed by PYR/PYL/RCAR ABA receptors in an ABA-dependent manner. Its function is as follows. Key component and repressor of the abscisic acid (ABA) signaling pathway that regulates numerous ABA responses, such as stomatal closure, osmotic water permeability of the plasma membrane (Pos), drought-induced resistance and rhizogenesis, response to glucose, high light stress, seed germination and inhibition of vegetative growth. During the stomatal closure regulation, modulates the inward calcium-channel permeability as well as the actin reorganization in guard cells in response to ABA. Involved in the resistance to the bacterial pathogen Pseudomonas syringae pv. tomato. Controls negatively fibrillin expression that is involved in mediating ABA-induced photoprotection. May be involved in ABA content regulation. Plays a role in the Pro accumulation in response to reduced water availability (low water potential). Required for the ABA negative regulation of the ethylene-induced hyponastic growth. Involved in acquired thermotolerance of root growth and seedling survival. Activates/represses SRK2E/OST1 in response to ABA-dependent stimuli, especially in stomata closure regulation involving SLAC1. Represses MAPKKK18 activity and promotes MAPKKK18 degradation by the proteasome pathway upon abscisic acid (ABA) treatment. Represses KIN10 activity by the specific dephosphorylation of its T-loop Thr-198, leading to a poststress inactivation of SnRK1 signaling. Restricts MAPKKK20 activity by dephosphorylation. This Arabidopsis thaliana (Mouse-ear cress) protein is Protein phosphatase 2C 56.